The sequence spans 28 residues: Phospholipase A2 2 (28 aa).

It belongs to the phospholipase A2 family. Group I subfamily. Requires Ca(2+) as cofactor. In terms of tissue distribution, expressed by the venom gland.

It localises to the secreted. It carries out the reaction a 1,2-diacyl-sn-glycero-3-phosphocholine + H2O = a 1-acyl-sn-glycero-3-phosphocholine + a fatty acid + H(+). Snake venom phospholipase A2 (PLA2) that inhibits neuromuscular transmission by blocking acetylcholine release from the nerve termini. PLA2 catalyzes the calcium-dependent hydrolysis of the 2-acyl groups in 3-sn-phosphoglycerides. This chain is Phospholipase A2 2, found in Micrurus nigrocinctus (Central American coral snake).